The sequence spans 533 residues: T-complex protein 1 subunit delta (533 aa).

Over residues 1 to 15 (MAQSQVGKGSPSNAT) the composition is skewed to polar residues. The disordered stretch occupies residues 1–25 (MAQSQVGKGSPSNATFRDKEKPQEV). Over residues 16–25 (FRDKEKPQEV) the composition is skewed to basic and acidic residues.

This sequence belongs to the TCP-1 chaperonin family. Heterooligomeric complex of about 850 to 900 kDa that forms two stacked rings, 12 to 16 nm in diameter.

The protein resides in the cytoplasm. Functionally, molecular chaperone; assists the folding of proteins upon ATP hydrolysis. Known to play a role, in vitro, in the folding of actin and tubulin. In Debaryomyces hansenii (strain ATCC 36239 / CBS 767 / BCRC 21394 / JCM 1990 / NBRC 0083 / IGC 2968) (Yeast), this protein is T-complex protein 1 subunit delta (CCT4).